A 369-amino-acid polypeptide reads, in one-letter code: Iron-sulfur cluster assembly SufBD family protein AF_2365 (369 aa).

The protein belongs to the iron-sulfur cluster assembly SufBD family.

The sequence is that of Iron-sulfur cluster assembly SufBD family protein AF_2365 from Archaeoglobus fulgidus (strain ATCC 49558 / DSM 4304 / JCM 9628 / NBRC 100126 / VC-16).